The following is a 1515-amino-acid chain: Apolipophorin (1515 aa).

Positions 952-1118 (LRGVVVNGQH…NSYRLASSCP (167 aa)) constitute a VWFD domain. The cysteines at positions 976 and 1117 are disulfide-linked. N-linked (GlcNAc...) asparagine glycosylation is present at asparagine 988.

In terms of tissue distribution, hemolymph.

It is found in the secreted. Its function is as follows. Mediates transport for various types of lipids in hemolymph. Acts by forming lipoprotein particles that bind lipoproteins and lipids. Binds the A.niger cell wall component alpha-1,3-glucan, a fungal pathogen-associated molecular pattern (PAMP) that activates the host immune response. This chain is Apolipophorin, found in Galleria mellonella (Greater wax moth).